A 156-amino-acid polypeptide reads, in one-letter code: ATP synthase subunit b (156 aa).

A helical transmembrane segment spans residues 7-27 (LIGQLIAFAIFVAFCMKFVWP).

This sequence belongs to the ATPase B chain family. As to quaternary structure, F-type ATPases have 2 components, F(1) - the catalytic core - and F(0) - the membrane proton channel. F(1) has five subunits: alpha(3), beta(3), gamma(1), delta(1), epsilon(1). F(0) has three main subunits: a(1), b(2) and c(10-14). The alpha and beta chains form an alternating ring which encloses part of the gamma chain. F(1) is attached to F(0) by a central stalk formed by the gamma and epsilon chains, while a peripheral stalk is formed by the delta and b chains.

Its subcellular location is the cell inner membrane. Functionally, f(1)F(0) ATP synthase produces ATP from ADP in the presence of a proton or sodium gradient. F-type ATPases consist of two structural domains, F(1) containing the extramembraneous catalytic core and F(0) containing the membrane proton channel, linked together by a central stalk and a peripheral stalk. During catalysis, ATP synthesis in the catalytic domain of F(1) is coupled via a rotary mechanism of the central stalk subunits to proton translocation. Component of the F(0) channel, it forms part of the peripheral stalk, linking F(1) to F(0). The protein is ATP synthase subunit b of Pasteurella multocida (strain Pm70).